The following is a 354-amino-acid chain: Arginase-2, mitochondrial (354 aa).

The N-terminal 22 residues, 1-22, are a transit peptide targeting the mitochondrion; the sequence is MFLRSSVSRLLHGQIPCALTRS. Residues His120, Asp143, His145, and Asp147 each coordinate Mn(2+). Substrate is bound by residues 145-149, 156-158, and Glu202; these read HADIN and SGN. Residues Asp251 and Asp253 each contribute to the Mn(2+) site. Residues Thr265 and Glu296 each contribute to the substrate site.

Belongs to the arginase family. Homotrimer. The cofactor is Mn(2+).

The protein resides in the mitochondrion. The catalysed reaction is L-arginine + H2O = urea + L-ornithine. It functions in the pathway nitrogen metabolism; urea cycle; L-ornithine and urea from L-arginine: step 1/1. May play a role in the regulation of extra-urea cycle arginine metabolism and also in down-regulation of nitric oxide synthesis. Extrahepatic arginase functions to regulate L-arginine bioavailability to nitric oxid synthase (NOS). Arginine metabolism is a critical regulator of innate and adaptive immune responses. Seems to be involved in negative regulation of the survival capacity of activated T cells. May suppress inflammation-related signaling in asthmatic airway epithelium. May play a role in promoting prenatal immune suppression. Regulates RPS6KB1 signaling, which promotes endothelial cell senescence and inflammation and implicates NOS3/eNOS dysfunction. Can inhibit endothelial autophagy independently of its enzymatic activity implicating mTORC2 signaling. Involved in vascular smooth muscle cell senescence and apoptosis independently of its enzymatic activity. The protein is Arginase-2, mitochondrial (Arg2) of Rattus norvegicus (Rat).